Here is a 233-residue protein sequence, read N- to C-terminus: Putative peroxiredoxin (233 aa).

The region spanning 41–200 (AQIGKEAPEF…TIRIVKAIQF (160 aa)) is the Thioredoxin domain. Cys-87 (cysteine sulfenic acid (-SOH) intermediate) is an active-site residue.

It belongs to the peroxiredoxin family. AhpC/Prx1 subfamily. Homodimer; disulfide-linked, upon oxidation.

It localises to the cell membrane. It carries out the reaction a hydroperoxide + [thioredoxin]-dithiol = an alcohol + [thioredoxin]-disulfide + H2O. Thiol-specific peroxidase that catalyzes the reduction of hydrogen peroxide and organic hydroperoxides to water and alcohols, respectively. Plays a role in cell protection against oxidative stress by detoxifying peroxides and as sensor of hydrogen peroxide-mediated signaling events. The chain is Putative peroxiredoxin from Entamoeba histolytica (strain ATCC 30459 / HM-1:IMSS / ABRM).